The following is a 568-amino-acid chain: Urease subunit alpha (568 aa).

A Urease domain is found at 129–568 (GAIDSHIHFI…LPMAQRYFLF (440 aa)). Residues His134, His136, and Lys217 each contribute to the Ni(2+) site. Lys217 carries the post-translational modification N6-carboxylysine. His219 lines the substrate pocket. The Ni(2+) site is built by His246 and His272. The active-site Proton donor is His320. Asp360 contributes to the Ni(2+) binding site.

Belongs to the metallo-dependent hydrolases superfamily. Urease alpha subunit family. In terms of assembly, heterotrimer of UreA (gamma), UreB (beta) and UreC (alpha) subunits. Three heterotrimers associate to form the active enzyme. Ni cation serves as cofactor. Carboxylation allows a single lysine to coordinate two nickel ions.

It localises to the cytoplasm. The enzyme catalyses urea + 2 H2O + H(+) = hydrogencarbonate + 2 NH4(+). It functions in the pathway nitrogen metabolism; urea degradation; CO(2) and NH(3) from urea (urease route): step 1/1. The polypeptide is Urease subunit alpha (Saccharophagus degradans (strain 2-40 / ATCC 43961 / DSM 17024)).